The chain runs to 637 residues: Epithelial sodium channel subunit alpha (637 aa).

The interval 1–34 (MGTASRGGSVKAEKMPEGEKTRQCKQETEQQQKE) is disordered. The Cytoplasmic segment spans residues 1 to 76 (MGTASRGGSV…VCSKKNKMKT (76 aa)). Positions 11–34 (KAEKMPEGEKTRQCKQETEQQQKE) are enriched in basic and acidic residues. The chain crosses the membrane as a helical span at residues 77–97 (AFWSVLFILTFGLMYWQFGIL). At 98-548 (YREYFSYPVN…NQWSLWFGSS (451 aa)) the chain is on the extracellular side. Disulfide bonds link C125–C292, C217–C224, C269–C276, C380–C465, C402–C442, C402–C461, C406–C457, C415–C442, C415–C465, and C417–C431. The chain crosses the membrane as a helical span at residues 549 to 569 (VLSVMELAELILDFTVITFIL). Over 570–637 (AFRWFRSKQW…PSKDGETGLE (68 aa)) the chain is Cytoplasmic.

It belongs to the amiloride-sensitive sodium channel (TC 1.A.6) family. SCNN1A subfamily. As to quaternary structure, heterotrimer; containing an alpha/SCNN1A, a beta/SCNN1B and a gamma/SCNN1G subunit. In terms of tissue distribution, the long isoform has been found in cochlea, colon, and cartilage. The short isoform is only found in cochlea.

It is found in the apical cell membrane. The protein localises to the cell projection. It localises to the cilium. The protein resides in the cytoplasmic granule. Its subcellular location is the cytoplasm. It is found in the cytoplasmic vesicle. The protein localises to the secretory vesicle. It localises to the acrosome. The protein resides in the flagellum. It catalyses the reaction Na(+)(in) = Na(+)(out). Its activity is regulated as follows. Originally identified and characterized by its inhibition by the diuretic drug amiloride. This is one of the three pore-forming subunits of the heterotrimeric epithelial sodium channel (ENaC), a critical regulator of sodium balance and fluid homeostasis. ENaC operates in epithelial tissues, where it mediates the electrodiffusion of sodium ions from extracellular fluid through the apical membrane of cells, with water following osmotically. The protein is Epithelial sodium channel subunit alpha of Gallus gallus (Chicken).